Here is a 134-residue protein sequence, read N- to C-terminus: Protein dpy-30 homolog (134 aa).

The tract at residues 1–81 (MEAKTDAPIS…ETNNMPTRQY (81 aa)) is disordered. Low complexity predominate over residues 31 to 68 (AQANPTAAPGAPPSGAIAVGQSTNPVAQQQQQPAVAKK). Residues 71–81 (SETNNMPTRQY) are compositionally biased toward polar residues.

It belongs to the dpy-30 family. In terms of assembly, core component of several methyltransferase-containing complexes. Component of the SET1 complex, composed at least of the catalytic subunit Set1, wds/WDR5, Wdr82, Rbbp5, ash2, Cfp1/CXXC1, hcf and Dpy-30L1. Component of the MLL3/4 complex composed at least of the catalytic subunit trr, ash2, Rbbp5, Dpy-30L1, wds, hcf, ptip, Pa1, Utx, Lpt and Ncoa6. In terms of tissue distribution, expressed in larval brain, gonad, imaginal disk and salivary gland and in adult brain, testis, ovary and salivary gland.

The protein localises to the nucleus. Component of the SET1 complex that specifically di- and trimethylates 'Lys-4' of histone H3 and of the MLL3/4 complex which also methylates histone H3 'Lys-4'. Inhibits MTF-1 transcription factor activity. This chain is Protein dpy-30 homolog, found in Drosophila melanogaster (Fruit fly).